The primary structure comprises 211 residues: Large ribosomal subunit protein mL48 (211 aa).

Residues 1–27 constitute a mitochondrion transit peptide; the sequence is MSGTLGKVLGVWTNTVSKQGFSLLRFR. K198 is modified (N6-succinyllysine).

This sequence belongs to the mitochondrion-specific ribosomal protein mL48 family. Component of the mitochondrial ribosome large subunit (39S) which comprises a 16S rRNA and about 50 distinct proteins. Interacts with OXA1L.

Its subcellular location is the mitochondrion. The sequence is that of Large ribosomal subunit protein mL48 (Mrpl48) from Mus musculus (Mouse).